The following is a 262-amino-acid chain: Tropinone reductase homolog At2g29290 (262 aa).

13 to 37 (LVTGGTKGIGEAVVEELSILGARVH) contributes to the NADP(+) binding site. Serine 146 provides a ligand contact to substrate. Tyrosine 159 serves as the catalytic Proton acceptor.

The protein belongs to the short-chain dehydrogenases/reductases (SDR) family. SDR65C subfamily.

The sequence is that of Tropinone reductase homolog At2g29290 from Arabidopsis thaliana (Mouse-ear cress).